The sequence spans 255 residues: MTTQLSVNVNKIAVLRNSRGGADPDVVQAARACIAAGAHGITVHPRPDQRHIRADDVLALSALTREHGVEFNIEGNPFAPPRGDYPGLLQLCRATRPEQVTLVPDGDGQLTSDHGFDFAQDTVQLAELITAFKRLGSRVSLFVDAGNPDIARAATLGADRIELYTGPYAHAHASGQADTALALFANAAQRASAAGLGINAGHDLSQANLGDFLAAVPGVLEVSIGHALISEALYQGLDASVRAYVDILRSGHVSA.

3-amino-2-oxopropyl phosphate is bound by residues Asn8 and Arg19. The active-site Proton acceptor is the His44. 1-deoxy-D-xylulose 5-phosphate-binding residues include Arg46 and His51. Catalysis depends on Glu74, which acts as the Proton acceptor. 1-deoxy-D-xylulose 5-phosphate is bound at residue Thr111. Residue His202 is the Proton donor of the active site. Residues Asp203 and 225 to 226 each bind 3-amino-2-oxopropyl phosphate; that span reads GH.

This sequence belongs to the PNP synthase family. Homooctamer; tetramer of dimers.

The protein resides in the cytoplasm. The enzyme catalyses 3-amino-2-oxopropyl phosphate + 1-deoxy-D-xylulose 5-phosphate = pyridoxine 5'-phosphate + phosphate + 2 H2O + H(+). Its pathway is cofactor biosynthesis; pyridoxine 5'-phosphate biosynthesis; pyridoxine 5'-phosphate from D-erythrose 4-phosphate: step 5/5. In terms of biological role, catalyzes the complicated ring closure reaction between the two acyclic compounds 1-deoxy-D-xylulose-5-phosphate (DXP) and 3-amino-2-oxopropyl phosphate (1-amino-acetone-3-phosphate or AAP) to form pyridoxine 5'-phosphate (PNP) and inorganic phosphate. This is Pyridoxine 5'-phosphate synthase from Xanthomonas axonopodis pv. citri (strain 306).